The sequence spans 372 residues: Alpha-L-fucosidase 3 (372 aa).

Positions 1 to 23 (MNPILSSLFALSLLSSLSPSTHA) are cleaved as a signal peptide. Ser-37 functions as the Nucleophile in the catalytic mechanism. 4 N-linked (GlcNAc...) asparagine glycosylation sites follow: Asn-96, Asn-114, Asn-139, and Asn-182. Residues Asp-345 and His-348 contribute to the active site.

The protein belongs to the 'GDSL' lipolytic enzyme family. As to expression, high expression in younger leaves and in the apical region of the inflorescence stem.

It is found in the secreted. It localises to the extracellular space. The protein resides in the apoplast. The catalysed reaction is an alpha-L-fucoside + H2O = L-fucose + an alcohol. In terms of biological role, hydrolyzes alpha-1,2-linked fucose. Also active on fucosylated xyloglucan oligosaccharides. The polypeptide is Alpha-L-fucosidase 3 (FXG1) (Arabidopsis thaliana (Mouse-ear cress)).